The chain runs to 102 residues: MAGQKIRIRLKAYDHEVIDSSARKIVETVTRTGARVAGPVPLPTEKNVYCVIRSPHKDKDSREHFEMRTHKRLIDIIDPTPRTVDSLMRLDLPAGVDIEIKL.

Belongs to the universal ribosomal protein uS10 family. As to quaternary structure, part of the 30S ribosomal subunit.

Involved in the binding of tRNA to the ribosomes. The chain is Small ribosomal subunit protein uS10 from Acidothermus cellulolyticus (strain ATCC 43068 / DSM 8971 / 11B).